We begin with the raw amino-acid sequence, 492 residues long: Protein nucleotidyltransferase YdiU (492 aa).

The ATP site is built by G91, G93, R94, K114, D126, G127, R180, and R187. The Proton acceptor role is filled by D256. Residues N257 and D266 each contribute to the Mg(2+) site. D266 provides a ligand contact to ATP.

It belongs to the SELO family. The cofactor is Mg(2+). Mn(2+) serves as cofactor.

It carries out the reaction L-seryl-[protein] + ATP = 3-O-(5'-adenylyl)-L-seryl-[protein] + diphosphate. The enzyme catalyses L-threonyl-[protein] + ATP = 3-O-(5'-adenylyl)-L-threonyl-[protein] + diphosphate. It catalyses the reaction L-tyrosyl-[protein] + ATP = O-(5'-adenylyl)-L-tyrosyl-[protein] + diphosphate. The catalysed reaction is L-histidyl-[protein] + UTP = N(tele)-(5'-uridylyl)-L-histidyl-[protein] + diphosphate. It carries out the reaction L-seryl-[protein] + UTP = O-(5'-uridylyl)-L-seryl-[protein] + diphosphate. The enzyme catalyses L-tyrosyl-[protein] + UTP = O-(5'-uridylyl)-L-tyrosyl-[protein] + diphosphate. In terms of biological role, nucleotidyltransferase involved in the post-translational modification of proteins. It can catalyze the addition of adenosine monophosphate (AMP) or uridine monophosphate (UMP) to a protein, resulting in modifications known as AMPylation and UMPylation. This Synechococcus elongatus (strain ATCC 33912 / PCC 7942 / FACHB-805) (Anacystis nidulans R2) protein is Protein nucleotidyltransferase YdiU.